We begin with the raw amino-acid sequence, 129 residues long: Small ribosomal subunit protein uS11 (129 aa).

The protein belongs to the universal ribosomal protein uS11 family. As to quaternary structure, part of the 30S ribosomal subunit. Interacts with proteins S7 and S18. Binds to IF-3.

In terms of biological role, located on the platform of the 30S subunit, it bridges several disparate RNA helices of the 16S rRNA. Forms part of the Shine-Dalgarno cleft in the 70S ribosome. This Bacillus cereus (strain ATCC 14579 / DSM 31 / CCUG 7414 / JCM 2152 / NBRC 15305 / NCIMB 9373 / NCTC 2599 / NRRL B-3711) protein is Small ribosomal subunit protein uS11.